We begin with the raw amino-acid sequence, 205 residues long: Mitotic spindle assembly checkpoint protein MAD2A (205 aa).

A2 carries the post-translational modification N-acetylalanine. Phosphoserine occurs at positions 6, 130, 170, 178, 185, and 195. The HORMA domain maps to 14–197 (RGSAEIVAEF…TTIHKVNSMV (184 aa)). The required for assuming the closed conformation and for interaction with CDC20 stretch occupies residues 195–205 (SMVAYKIPVND).

The protein belongs to the MAD2 family. As to quaternary structure, monomer and homodimer. Heterodimerizes with MAD2L1 in order to form a tetrameric MAD1L1-MAD2L1 core complex. In the closed and open conformation, interacts with MAD1L1. Formation of a heterotetrameric core complex containing two molecules each of MAD1L1 and of MAD2L1 promotes binding of another molecule of MAD2L1 to each MAD2L1, resulting in a heterohexamer. Interacts with MAD2L1BP. Interacts with ADAM17/TACE. Interacts with CDC20. Dimeric MAD2L1 in the closed conformation interacts with CDC20. Monomeric MAD2L1 in the open conformation does not interact with CDC20. CDC20 competes with MAD1L1 for MAD2L1 binding. In the closed conformation, interacts with BUB1B. Interacts with TTK. Interacts with TPR. Binds to UBD (via ubiquitin-like 1 domain) during mitosis. Interacts with isoform 1 and isoform 2 of NEK2. Interacts with HSF1; this interaction occurs in mitosis. Interacts with isoform 3 of MAD1L1; this interaction leads to the cytoplasmic sequestration of MAD2L1. Post-translationally, phosphorylated on multiple serine residues. The level of phosphorylation varies during the cell cycle and is highest during mitosis. Phosphorylation abolishes interaction with MAD1L1 and reduces interaction with CDC20. Phosphorylated by NEK2.

Its subcellular location is the nucleus. The protein resides in the chromosome. The protein localises to the centromere. It localises to the kinetochore. It is found in the cytoplasm. Its subcellular location is the cytoskeleton. The protein resides in the spindle pole. Its function is as follows. Component of the spindle-assembly checkpoint that prevents the onset of anaphase until all chromosomes are properly aligned at the metaphase plate. In the closed conformation (C-MAD2) forms a heterotetrameric complex with MAD1L1 at unattached kinetochores during prometaphase, the complex recruits open conformation molecules of MAD2L1 (O-MAD2) and then promotes the conversion of O-MAD2 to C-MAD2. Required for the execution of the mitotic checkpoint which monitors the process of kinetochore-spindle attachment and inhibits the activity of the anaphase promoting complex by sequestering CDC20 until all chromosomes are aligned at the metaphase plate. This Homo sapiens (Human) protein is Mitotic spindle assembly checkpoint protein MAD2A (MAD2L1).